Here is an 896-residue protein sequence, read N- to C-terminus: Pentatricopeptide repeat-containing protein At5g03800 (896 aa).

PPR repeat units lie at residues 113–143, 144–178, 180–214, 215–247, 248–278, 284–318, 319–349, 350–380, 381–415, 416–450, 451–481, 484–519, 520–554, 555–585, 586–620, 621–653, and 659–689; these read KTRLGNALISTYLKLGFPREAILVFVSLSSP, TVVSYTALISGFSRLNLEIEALKVFFRMRKAGLVQ, NEYTFVAILTACVRVSRFSLGIQIHGLIVKSGFLN, SVFVSNSLMSLYDKDSGSSCDDVLKLFDEIPQR, DVASWNTVVSSLVKEGKSHKAFDLFYEMNRV, DSFTLSTLLSSCTDSSVLLRGRELHGRAIRIGLMQ, ELSVNNALIGFYSKFWDMKKVESLYEMMMAQ, DAVTFTEMITAYMSFGMVDSAVEIFANVTEK, NTITYNALMAGFCRNGHGLKALKLFTDMLQRGVEL, TDFSLTSAVDACGLVSEKKVSEQIHGFCIKFGTAF, NPCIQTALLDMCTRCERMADAEEMFDQWPSN, SSKATTSIIGGYARNGLPDKAVSLFHRTLCEQKLFL, DEVSLTLILAVCGTLGFREMGYQIHCYALKAGYFS, DISLGNSLISMYAKCCDSDDAIKIFNTMREH, DVISWNSLISCYILQRNGDEALALWSRMNEKEIKP, DIITLTLVISAFRYTESNKLSSCRDLFLSMKTI, and TTEHYTAFVRVLGHWGLLEEAEDTINSMPVQ. The interval 694-769 is type E motif; that stretch reads VLRALLDSCR…HPAKSWIIHE (76 aa). Positions 770–800 are type E(+) motif; sequence NKIHSFHARDTSHPQEKDIYRGLEILIMECL. Positions 801–896 are type DYW motif; the sequence is KVGYEPNTEY…NGKCSCRDLW (96 aa).

The protein belongs to the PPR family. PCMP-H subfamily.

May play a role in embryogenesis. This chain is Pentatricopeptide repeat-containing protein At5g03800 (EMB175), found in Arabidopsis thaliana (Mouse-ear cress).